Here is a 335-residue protein sequence, read N- to C-terminus: Pro-cathepsin H (335 aa).

The first 22 residues, Met1–Ala22, serve as a signal peptide directing secretion. The propeptide occupies Ser23–Ser97. Residues Asn72 and Asn101 are each glycosylated (N-linked (GlcNAc...) asparagine). 4 cysteine pairs are disulfide-bonded: Cys102-Cys327, Cys138-Cys181, Cys172-Cys214, and Cys272-Cys322. Positions Gly107–Pro115 are excised as a propeptide. Residue Cys141 is part of the active site. The N-linked (GlcNAc...) asparagine glycan is linked to Asn230. Catalysis depends on residues His281 and Asn301.

This sequence belongs to the peptidase C1 family. In terms of assembly, composed of cathepsin H and mini chain; disulfide-linked. Cathepsin H may be split into heavy and light chain. All chains are held together by disulfide bonds.

It localises to the lysosome. It carries out the reaction Hydrolysis of proteins, acting as an aminopeptidase (notably, cleaving Arg-|-Xaa bonds) as well as an endopeptidase.. Important for the overall degradation of proteins in lysosomes. This chain is Pro-cathepsin H (CTSH), found in Sus scrofa (Pig).